The sequence spans 130 residues: Small ribosomal subunit protein uS9 (130 aa).

The segment at T105–R130 is disordered. Positions K111–R130 are enriched in basic residues.

This sequence belongs to the universal ribosomal protein uS9 family.

The protein is Small ribosomal subunit protein uS9 of Lactiplantibacillus plantarum (strain ATCC BAA-793 / NCIMB 8826 / WCFS1) (Lactobacillus plantarum).